The sequence spans 236 residues: Ribose-5-phosphate isomerase (236 aa).

Residues 27 to 30 (TGST), 84 to 87 (DGTD), and 97 to 100 (KGRG) each bind substrate. Glu106 (proton acceptor) is an active-site residue. Lys124 is a binding site for substrate.

It belongs to the ribose 5-phosphate isomerase family. In terms of assembly, homodimer.

It carries out the reaction aldehydo-D-ribose 5-phosphate = D-ribulose 5-phosphate. The protein operates within carbohydrate degradation; pentose phosphate pathway; D-ribose 5-phosphate from D-ribulose 5-phosphate (non-oxidative stage): step 1/1. Involved in the first step of the non-oxidative branch of the pentose phosphate pathway. It catalyzes the reversible conversion of ribose-5-phosphate to ribulose 5-phosphate. The chain is Ribose-5-phosphate isomerase from Plasmodium falciparum (isolate 3D7).